Reading from the N-terminus, the 241-residue chain is Ribonuclease PH (241 aa).

Phosphate-binding positions include Arg89 and Gly127 to Arg129.

The protein belongs to the RNase PH family. In terms of assembly, homohexameric ring arranged as a trimer of dimers.

It carries out the reaction tRNA(n+1) + phosphate = tRNA(n) + a ribonucleoside 5'-diphosphate. Its function is as follows. Phosphorolytic 3'-5' exoribonuclease that plays an important role in tRNA 3'-end maturation. Removes nucleotide residues following the 3'-CCA terminus of tRNAs; can also add nucleotides to the ends of RNA molecules by using nucleoside diphosphates as substrates, but this may not be physiologically important. Probably plays a role in initiation of 16S rRNA degradation (leading to ribosome degradation) during starvation. The polypeptide is Ribonuclease PH (Stenotrophomonas maltophilia (strain K279a)).